An 873-amino-acid chain; its full sequence is Zinc fingers and homeoboxes protein 1 (873 aa).

Thr36 is subject to Phosphothreonine. Residues 41-63 form a disordered region; that stretch reads AKAESVSSDEEVHGSVDSDNQQN. Phosphoserine occurs at positions 45, 47, and 48. The span at 50 to 63 shows a compositional bias: basic and acidic residues; sequence EEVHGSVDSDNQQN. C2H2-type zinc fingers lie at residues 70–93 and 102–125; these read YECKYCTFQTPDLNMFTFHVDSEH and YVCVECNFLTKRYDALSEHNLKYH. Lys159 is covalently cross-linked (Glycyl lysine isopeptide (Lys-Gly) (interchain with G-Cter in SUMO2)). The segment at 198–247 is disordered; that stretch reads VHHNSAEGTSEEKENGVKASQEENAESVSSSALESNTSTSTINRVHPSPA. Ser202 carries the phosphoserine modification. Low complexity predominate over residues 223–238; that stretch reads ESVSSSALESNTSTST. The tract at residues 272–432 is required for dimerization; the sequence is NSNLLPKVLI…QTNVQKSQVP (161 aa). Positions 272 to 564 are required for interaction with NFYA; it reads NSNLLPKVLI…SQQKQSWNPF (293 aa). Residues 284–346 constitute a DNA-binding region (homeobox 1); it reads NSIPTYNAAL…LKHGVSWTPE (63 aa). Residues 429-456 form a disordered region; that stretch reads SQVPAAQPATDTKPATAAVPSSPSVRPE. Glycyl lysine isopeptide (Lys-Gly) (interchain with G-Cter in SUMO2) cross-links involve residues Lys441 and Lys485. Residues 464-526 constitute a DNA-binding region (homeobox 2); it reads SFGIRAKKTK…YNQRNSKSNQ (63 aa). Disordered regions lie at residues 541-568, 627-668, and 731-767; these read DSSDETPEPPAAAASQQKQSWNPFPDFA, DEKI…CKKT, and SSSLNGLSSLRRRGRGRPKGRGRGRPRGRPRGGKRMN. A DNA-binding region (homeobox 3) is located at residues 569–630; sequence PQKFKEKTAE…KTKALKDEKI (62 aa). Lys629 is covalently cross-linked (Glycyl lysine isopeptide (Lys-Gly) (interchain with G-Cter in SUMO2)). Position 648 is a phosphoserine (Ser648). The segment at residues 660–722 is a DNA-binding region (homeobox 4); that stretch reads GTGKICKKTP…YAWKNGNLKW (63 aa). Residues 734 to 768 are required for nuclear localization; the sequence is LNGLSSLRRRGRGRPKGRGRGRPRGRPRGGKRMNT. The span at 740-764 shows a compositional bias: basic residues; that stretch reads LRRRGRGRPKGRGRGRPRGRPRGGK. Phosphoserine is present on Ser774. A DNA-binding region (homeobox 5) is located at residues 777-832; sequence KFKTGTAILKDYYLKHKFLNEQDLDELVNRSHMGYEQVREWFAERQRRSELGIELF. Positions 829-873 are disordered; sequence IELFEENEEEDEVVDDQEEDEEETDDSDTWEPPRHVKRKLSKSDD. The segment covering 831–857 has biased composition (acidic residues); it reads LFEENEEEDEVVDDQEEDEEETDDSDT. The segment at 831–873 is required for repressor activity; sequence LFEENEEEDEVVDDQEEDEEETDDSDTWEPPRHVKRKLSKSDD. A compositionally biased stretch (basic residues) spans 863 to 873; it reads HVKRKLSKSDD.

This sequence belongs to the ZHX family. Forms homodimers. Heterodimer (via HD1 domain) with ZHX2 (via HD1 domain). Also forms a heterodimer with ZHX3 which is a prerequisite for repressor activity. Interacts with ATF7IP and NFYA. Interacts (via homeobox domains) with DNMT3B (via PWWP domain). Widely expressed with highest levels in brain.

It localises to the nucleus. In terms of biological role, acts as a transcriptional repressor. Increases DNMT3B-mediated repressive transcriptional activity when DNMT3B is tethered to DNA. May link molecule between DNMT3B and other co-repressor proteins. The chain is Zinc fingers and homeoboxes protein 1 (Zhx1) from Mus musculus (Mouse).